The sequence spans 857 residues: Putative disease resistance protein At1g50180 (857 aa).

A coiled-coil region spans residues 27–60; the sequence is IGDQVKQLQDELKRLNCFLKDADEKQHESERVRN. In terms of domain architecture, NB-ARC spans 148 to 461; the sequence is SLREQRQSFP…AEGMVMPVKH (314 aa). Residue 192–199 participates in ATP binding; sequence GMGGLGKT. LRR repeat units follow at residues 653–678, 680–703, 754–780, and 791–816; these read MTSL…SLSK, LKRL…DVTQ, LPNL…NLEN, and MMRL…RFLK.

Belongs to the disease resistance NB-LRR family.

Its function is as follows. Potential disease resistance protein. This chain is Putative disease resistance protein At1g50180, found in Arabidopsis thaliana (Mouse-ear cress).